A 226-amino-acid chain; its full sequence is Late protein I226R (226 aa).

The first 16 residues, 1–16 (MKMETFLVCLFHNAKG), serve as a signal peptide directing secretion. An N-linked (GlcNAc...) asparagine; by host glycan is attached at asparagine 164.

Belongs to the asfivirus I226R family.

Plays a role in the inhibition of host NF-kappa-B and IRF3 signaling pathways. Mechanistically, promotes the degradation of host IKBKG through enhancing its ubiquitination leading to inhibition of both pathways. In Ornithodoros (relapsing fever ticks), this protein is Late protein I226R.